The chain runs to 379 residues: Protein PatA (379 aa).

Residues arginine 181–asparagine 226 are disordered. The span at serine 186–proline 212 shows a compositional bias: polar residues. One can recognise a Response regulatory domain in the interval threonine 262–isoleucine 378. Residue aspartate 313 is modified to 4-aspartylphosphate.

The protein resides in the cell septum. Functionally, controls heterocyst pattern formation. Required for the differentiation of intercalary heterocysts but not for terminal heterocysts. The sequence is that of Protein PatA (patA) from Nostoc sp. (strain PCC 7120 / SAG 25.82 / UTEX 2576).